The chain runs to 392 residues: DNA primase small subunit PriS (392 aa).

Active-site residues include D98, D100, and D295.

Belongs to the eukaryotic-type primase small subunit family. In terms of assembly, heterodimer of a small subunit (PriS) and a large subunit (PriL). It depends on Mg(2+) as a cofactor. The cofactor is Mn(2+).

Catalytic subunit of DNA primase, an RNA polymerase that catalyzes the synthesis of short RNA molecules used as primers for DNA polymerase during DNA replication. The small subunit contains the primase catalytic core and has DNA synthesis activity on its own. Binding to the large subunit stabilizes and modulates the activity, increasing the rate of DNA synthesis while decreasing the length of the DNA fragments, and conferring RNA synthesis capability. The DNA polymerase activity may enable DNA primase to also catalyze primer extension after primer synthesis. May also play a role in DNA repair. This Haloarcula marismortui (strain ATCC 43049 / DSM 3752 / JCM 8966 / VKM B-1809) (Halobacterium marismortui) protein is DNA primase small subunit PriS.